The primary structure comprises 180 residues: Hypoxanthine-guanine phosphoribosyltransferase (180 aa).

GMP is bound by residues Lys-40, 99 to 107 (EDIVDSGLT), Lys-131, and Asp-159. The Proton acceptor role is filled by Asp-103. Residue Asp-159 participates in Mg(2+) binding.

Belongs to the purine/pyrimidine phosphoribosyltransferase family. Requires Mg(2+) as cofactor.

The protein resides in the cytoplasm. It carries out the reaction IMP + diphosphate = hypoxanthine + 5-phospho-alpha-D-ribose 1-diphosphate. The catalysed reaction is GMP + diphosphate = guanine + 5-phospho-alpha-D-ribose 1-diphosphate. Its pathway is purine metabolism; IMP biosynthesis via salvage pathway; IMP from hypoxanthine: step 1/1. Converts guanine to guanosine monophosphate, and hypoxanthine to inosine monophosphate. Transfers the 5-phosphoribosyl group from 5-phosphoribosylpyrophosphate onto the purine. Plays a central role in the generation of purine nucleotides through the purine salvage pathway. This chain is Hypoxanthine-guanine phosphoribosyltransferase (hprT), found in Dictyostelium discoideum (Social amoeba).